Reading from the N-terminus, the 488-residue chain is uncharacterized protein (488 aa).

This sequence belongs to the IIV-6 467R family.

This is an uncharacterized protein from Invertebrate iridescent virus 3 (IIV-3).